A 289-amino-acid chain; its full sequence is Acetyl-coenzyme A carboxylase carboxyl transferase subunit beta (289 aa).

Residues 28 to 289 enclose the CoA carboxyltransferase N-terminal domain; sequence VMTKCPKCKK…QGGEMAVWQS (262 aa). Zn(2+) is bound by residues Cys-32, Cys-35, Cys-51, and Cys-54. Residues 32-54 form a C4-type zinc finger; that stretch reads CPKCKKIMYTKEVLKNLKVCVNC.

Belongs to the AccD/PCCB family. Acetyl-CoA carboxylase is a heterohexamer composed of biotin carboxyl carrier protein (AccB), biotin carboxylase (AccC) and two subunits each of ACCase subunit alpha (AccA) and ACCase subunit beta (AccD). It depends on Zn(2+) as a cofactor.

It is found in the cytoplasm. It catalyses the reaction N(6)-carboxybiotinyl-L-lysyl-[protein] + acetyl-CoA = N(6)-biotinyl-L-lysyl-[protein] + malonyl-CoA. The protein operates within lipid metabolism; malonyl-CoA biosynthesis; malonyl-CoA from acetyl-CoA: step 1/1. Its function is as follows. Component of the acetyl coenzyme A carboxylase (ACC) complex. Biotin carboxylase (BC) catalyzes the carboxylation of biotin on its carrier protein (BCCP) and then the CO(2) group is transferred by the transcarboxylase to acetyl-CoA to form malonyl-CoA. This chain is Acetyl-coenzyme A carboxylase carboxyl transferase subunit beta, found in Bacillus cereus (strain ZK / E33L).